Consider the following 150-residue polypeptide: Ribonuclease K6 (150 aa).

The N-terminal stretch at 1 to 23 (MVLCFPLLLLLLVLWGPVCPLHA) is a signal peptide. H38 acts as the Proton acceptor in catalysis. 4 disulfides stabilise this stretch: C46–C104, C60–C114, C78–C129, and C85–C92. Residue N55 is glycosylated (N-linked (GlcNAc...) asparagine). Substrate contacts are provided by residues 61–65 (KHQNT) and K86. N100 is a glycosylation site (N-linked (GlcNAc...) asparagine). R105 contacts substrate. The active-site Proton donor is H145.

Belongs to the pancreatic ribonuclease family. In terms of assembly, interacts (via N-terminus) with bacterial lipopolysaccharide (LPS).

It is found in the secreted. The protein localises to the lysosome. The protein resides in the cytoplasmic granule. Its function is as follows. Ribonuclease which shows a preference for the pyrimidines uridine and cytosine. Has potent antibacterial activity against a range of Gram-positive and Gram-negative bacteria, including P.aeruginosa, A.baumanii, M.luteus, S.aureus, E.faecalis, E.faecium, S.saprophyticus and E.coli. Causes loss of bacterial membrane integrity, and also promotes agglutination of Gram-negative bacteria. Probably contributes to urinary tract sterility. Bactericidal activity is independent of RNase activity. The chain is Ribonuclease K6 (RNASE6) from Pongo pygmaeus (Bornean orangutan).